The sequence spans 105 residues: Large ribosomal subunit protein uL24 (105 aa).

It belongs to the universal ribosomal protein uL24 family. In terms of assembly, part of the 50S ribosomal subunit.

Its function is as follows. One of two assembly initiator proteins, it binds directly to the 5'-end of the 23S rRNA, where it nucleates assembly of the 50S subunit. One of the proteins that surrounds the polypeptide exit tunnel on the outside of the subunit. The protein is Large ribosomal subunit protein uL24 of Clostridium botulinum (strain Langeland / NCTC 10281 / Type F).